The following is a 560-amino-acid chain: Serine/threonine-protein kinase TOS3 (560 aa).

The Protein kinase domain occupies 50–344; that stretch reads FEILATLGNG…LADIKVHPFM (295 aa). ATP contacts are provided by residues 56–64 and Lys79; that span reads LGNGQYGKV. Asp189 acts as the Proton acceptor in catalysis.

This sequence belongs to the protein kinase superfamily. Ser/Thr protein kinase family. Autophosphorylated.

It catalyses the reaction L-seryl-[protein] + ATP = O-phospho-L-seryl-[protein] + ADP + H(+). It carries out the reaction L-threonyl-[protein] + ATP = O-phospho-L-threonyl-[protein] + ADP + H(+). One of the three SNF1 protein kinases (with SAK1 and ELM1) which are required for growth on nonfermentable carbon sources and nonpreferred sugars and for response to environmental stress. Activates SNF1 by phosphorylation of its activation-loop 'Thr-210'. Required for the regulation by SNF1 of the transcription of a large set of genes, the modification the activity of metabolic enzymes, and the control of various nutrient-responsive cellular developmental processes. Also phosphorylates GAL83, MIG1 and SIP2. In Saccharomyces cerevisiae (strain YJM789) (Baker's yeast), this protein is Serine/threonine-protein kinase TOS3 (TOS3).